A 437-amino-acid polypeptide reads, in one-letter code: 3-phosphoshikimate 1-carboxyvinyltransferase (437 aa).

3-phosphoshikimate is bound by residues Lys-28, Ser-29, and Arg-33. Lys-28 contacts phosphoenolpyruvate. Residues Gly-97 and Arg-125 each coordinate phosphoenolpyruvate. Positions 168, 169, 170, 316, and 343 each coordinate 3-phosphoshikimate. A phosphoenolpyruvate-binding site is contributed by Gln-170. The active-site Proton acceptor is the Glu-316. Arg-347, Arg-388, and Lys-413 together coordinate phosphoenolpyruvate.

The protein belongs to the EPSP synthase family. In terms of assembly, monomer.

It is found in the cytoplasm. The enzyme catalyses 3-phosphoshikimate + phosphoenolpyruvate = 5-O-(1-carboxyvinyl)-3-phosphoshikimate + phosphate. Its pathway is metabolic intermediate biosynthesis; chorismate biosynthesis; chorismate from D-erythrose 4-phosphate and phosphoenolpyruvate: step 6/7. Functionally, catalyzes the transfer of the enolpyruvyl moiety of phosphoenolpyruvate (PEP) to the 5-hydroxyl of shikimate-3-phosphate (S3P) to produce enolpyruvyl shikimate-3-phosphate and inorganic phosphate. This chain is 3-phosphoshikimate 1-carboxyvinyltransferase, found in Rhodococcus erythropolis (strain PR4 / NBRC 100887).